A 304-amino-acid chain; its full sequence is MLEQALLDDLVAKVRPLLGQGKVADYIPALARVSPYKLGIAVTTIDGTTLGAGDWQEAFSIQSISKVFSLTGAMMLYEEREIWSRVGKEPSGHSFNSLVQVELERGIPRNPFINAGALVIADLLQSRLGAPKQRMLEIVRMLSQNHKVCYDKVVADSEYQHSARNAAIAFLMKSFGNFHNDVDKVLRSYFHYCSLSMSCADLSRAMVYLANQGVSLDGNEVVSPTQTRRLNALLATSGLYDGAGEFAYRVGMPGKSGVGGGIIAVIPGDMSVCVWSPALDASGNSLAGTRLLELLAQELGRSIF.

Substrate contacts are provided by S63, N114, E158, N165, Y189, Y240, and V258.

This sequence belongs to the glutaminase family. In terms of assembly, homotetramer.

The enzyme catalyses L-glutamine + H2O = L-glutamate + NH4(+). This chain is Glutaminase, found in Shewanella amazonensis (strain ATCC BAA-1098 / SB2B).